A 99-amino-acid polypeptide reads, in one-letter code: A-type ATP synthase subunit F (99 aa).

This sequence belongs to the V-ATPase F subunit family. Has multiple subunits with at least A(3), B(3), C, D, E, F, H, I and proteolipid K(x).

The protein resides in the cell membrane. Component of the A-type ATP synthase that produces ATP from ADP in the presence of a proton gradient across the membrane. The polypeptide is A-type ATP synthase subunit F (Methanococcus maripaludis (strain C6 / ATCC BAA-1332)).